Consider the following 460-residue polypeptide: Hydroxyproline dehydrogenase (460 aa).

Residue K310 is modified to N6-acetyllysine.

The protein belongs to the proline oxidase family. The cofactor is FAD.

It catalyses the reaction trans-4-hydroxy-L-proline + a quinone = (3R,5S)-1-pyrroline-3-hydroxy-5-carboxylate + a quinol + H(+). The enzyme catalyses L-proline + a quinone = (S)-1-pyrroline-5-carboxylate + a quinol + H(+). With respect to regulation, hydroproxyproline dehydrogenase activity is inhibited by THFA,(1R,3R)3-OH-cyclopentane-COOH and 5-OH-1H-pyrazole-3-COOH. Functionally, dehydrogenase that converts trans-4-L-hydroxyproline to delta-1-pyrroline-3-hydroxy-5-carboxylate (Hyp) using ubiquinone-10 as the terminal electron acceptor. Can also use proline as a substrate but with a very much lower efficiency. Does not react with other diastereomers of Hyp: trans-4-D-hydroxyproline and cis-4-L-hydroxyproline. Ubiquininone analogs such as menadione, duroquinone and ubiquinone-1 react more efficiently than oxygen as the terminal electron acceptor during catalysis. The chain is Hydroxyproline dehydrogenase from Homo sapiens (Human).